Here is a 255-residue protein sequence, read N- to C-terminus: Pyridoxine 5'-phosphate synthase (255 aa).

3-amino-2-oxopropyl phosphate-binding residues include Asn-8 and Arg-19. The active-site Proton acceptor is His-44. 1-deoxy-D-xylulose 5-phosphate is bound by residues Arg-46 and His-51. Catalysis depends on Glu-74, which acts as the Proton acceptor. Position 111 (Thr-111) interacts with 1-deoxy-D-xylulose 5-phosphate. Catalysis depends on His-202, which acts as the Proton donor. 3-amino-2-oxopropyl phosphate-binding positions include Asp-203 and 225–226; that span reads GH.

Belongs to the PNP synthase family. In terms of assembly, homooctamer; tetramer of dimers.

It localises to the cytoplasm. It carries out the reaction 3-amino-2-oxopropyl phosphate + 1-deoxy-D-xylulose 5-phosphate = pyridoxine 5'-phosphate + phosphate + 2 H2O + H(+). The protein operates within cofactor biosynthesis; pyridoxine 5'-phosphate biosynthesis; pyridoxine 5'-phosphate from D-erythrose 4-phosphate: step 5/5. Functionally, catalyzes the complicated ring closure reaction between the two acyclic compounds 1-deoxy-D-xylulose-5-phosphate (DXP) and 3-amino-2-oxopropyl phosphate (1-amino-acetone-3-phosphate or AAP) to form pyridoxine 5'-phosphate (PNP) and inorganic phosphate. This Xanthomonas axonopodis pv. citri (strain 306) protein is Pyridoxine 5'-phosphate synthase.